We begin with the raw amino-acid sequence, 66 residues long: Small ribosomal subunit protein bS21 (66 aa).

It belongs to the bacterial ribosomal protein bS21 family.

The sequence is that of Small ribosomal subunit protein bS21 from Bdellovibrio bacteriovorus (strain ATCC 15356 / DSM 50701 / NCIMB 9529 / HD100).